The following is a 54-amino-acid chain: Large ribosomal subunit protein bL32c (54 aa).

This sequence belongs to the bacterial ribosomal protein bL32 family.

The protein resides in the plastid. The protein localises to the chloroplast. In Helianthus annuus (Common sunflower), this protein is Large ribosomal subunit protein bL32c.